Reading from the N-terminus, the 125-residue chain is Cytochrome c-556 (125 aa).

The heme site is built by Met-13, Cys-113, Cys-116, and His-117. Heme c-binding residues include Met-13, Cys-113, Cys-116, and His-117.

Monomer. Binds 1 heme c group covalently per subunit.

Low-spin monoheme cytochrome c. In Agrobacterium tumefaciens (strain apple 185), this protein is Cytochrome c-556.